The sequence spans 102 residues: CRISPR-associated endoribonuclease Cas2 (102 aa).

D8 lines the Mg(2+) pocket.

The protein belongs to the CRISPR-associated endoribonuclease Cas2 protein family. In terms of assembly, homodimer, forms a heterotetramer with a Cas1 homodimer. Mg(2+) is required as a cofactor.

CRISPR (clustered regularly interspaced short palindromic repeat), is an adaptive immune system that provides protection against mobile genetic elements (viruses, transposable elements and conjugative plasmids). CRISPR clusters contain sequences complementary to antecedent mobile elements and target invading nucleic acids. CRISPR clusters are transcribed and processed into CRISPR RNA (crRNA). Functions as a ssRNA-specific endoribonuclease. Involved in the integration of spacer DNA into the CRISPR cassette. The sequence is that of CRISPR-associated endoribonuclease Cas2 from Acidovorax ebreus (strain TPSY) (Diaphorobacter sp. (strain TPSY)).